Reading from the N-terminus, the 365-residue chain is DNA repair protein rhp51 (365 aa).

Positions 1-25 are disordered; that stretch reads MADTEVEMQVSAADTNNNENGQAQS. The span at 12 to 25 shows a compositional bias: polar residues; sequence AADTNNNENGQAQS. 149 to 156 provides a ligand contact to ATP; the sequence is GEFRTGKS.

Belongs to the RecA family. RAD51 subfamily. In terms of assembly, interacts with rad22, rad54, rdh54, rhp54, rti1, swi2 and swi5. Forms homooiligomers.

It is found in the nucleus. Required both for recombination and for the repair of DNA damage caused by X-rays. Binds to single and double-stranded DNA, in the presence of magnesium, and exhibits DNA-dependent ATPase activity. Promotes DNA strand annealing and strand exchange via DNA recombinase activity and forms helical nucleoprotein filaments. This Schizosaccharomyces pombe (strain 972 / ATCC 24843) (Fission yeast) protein is DNA repair protein rhp51 (rhp51).